We begin with the raw amino-acid sequence, 210 residues long: Probable septum site-determining protein MinC (210 aa).

It belongs to the MinC family. Interacts with MinD and FtsZ.

Functionally, cell division inhibitor that blocks the formation of polar Z ring septums. Rapidly oscillates between the poles of the cell to destabilize FtsZ filaments that have formed before they mature into polar Z rings. Prevents FtsZ polymerization. This is Probable septum site-determining protein MinC from Thermotoga neapolitana (strain ATCC 49049 / DSM 4359 / NBRC 107923 / NS-E).